A 223-amino-acid polypeptide reads, in one-letter code: 2-C-methyl-D-erythritol 4-phosphate cytidylyltransferase (223 aa).

This sequence belongs to the IspD/TarI cytidylyltransferase family. IspD subfamily.

The catalysed reaction is 2-C-methyl-D-erythritol 4-phosphate + CTP + H(+) = 4-CDP-2-C-methyl-D-erythritol + diphosphate. It participates in isoprenoid biosynthesis; isopentenyl diphosphate biosynthesis via DXP pathway; isopentenyl diphosphate from 1-deoxy-D-xylulose 5-phosphate: step 2/6. Catalyzes the formation of 4-diphosphocytidyl-2-C-methyl-D-erythritol from CTP and 2-C-methyl-D-erythritol 4-phosphate (MEP). This Prochlorococcus marinus (strain AS9601) protein is 2-C-methyl-D-erythritol 4-phosphate cytidylyltransferase.